The following is a 284-amino-acid chain: MSDNADTKKRTRLNKLQKKLRRETGRAIADFNMISEGDKVMVCLSGGKDSYTMLEILRNLQHSAPVNFELVAVNMDQKQPGFPEHILPEYLEKEGVAYHILEKDTYSIVKEKVPEGKTTCGLCSRLRRGSLYGFAEEIGANKIALGHHRDDIVETLFLNMFYGGKMKAMPPKLRSDDSRNVVIRPLAYCREKDIIEFSALKEYPIIPCNLCGSQKNLQRQVIKEMLQQWDKQQPGRIENIFAAVQNIAPSQLADTRLFDFENLEQGQQQGGDQAHRLDVVNLFG.

The PP-loop motif signature appears at 45 to 50 (SGGKDS). [4Fe-4S] cluster-binding residues include Cys-120, Cys-123, and Cys-211.

Belongs to the TtcA family. Homodimer. It depends on Mg(2+) as a cofactor. Requires [4Fe-4S] cluster as cofactor.

It localises to the cytoplasm. The enzyme catalyses cytidine(32) in tRNA + S-sulfanyl-L-cysteinyl-[cysteine desulfurase] + AH2 + ATP = 2-thiocytidine(32) in tRNA + L-cysteinyl-[cysteine desulfurase] + A + AMP + diphosphate + H(+). It participates in tRNA modification. Catalyzes the ATP-dependent 2-thiolation of cytidine in position 32 of tRNA, to form 2-thiocytidine (s(2)C32). The sulfur atoms are provided by the cysteine/cysteine desulfurase (IscS) system. This chain is tRNA-cytidine(32) 2-sulfurtransferase, found in Alcanivorax borkumensis (strain ATCC 700651 / DSM 11573 / NCIMB 13689 / SK2).